Consider the following 390-residue polypeptide: Aspartate beta-hydroxylase domain-containing protein 1 (390 aa).

The segment at 1–54 (MKEGRGSFSVERGPRKERETAQSGMWKGNSPAGSQGAAMEGTGGELGGQGNWGP) is disordered. The Cytoplasmic portion of the chain corresponds to 1 to 72 (MKEGRGSFSV…RASLIMLPWP (72 aa)). Positions 41–51 (GTGGELGGQGN) are enriched in gly residues. The chain crosses the membrane as a helical span at residues 73 to 95 (LPLASSALTLLFGALTSLFLWYC). Residues 96-390 (YRLGSQDMQA…ALDFVFAPDP (295 aa)) are Lumenal-facing. The tract at residues 116–143 (RGGPVGCSEAGGPSPGGPGDPGEGPRTE) is disordered. The segment covering 128-137 (PSPGGPGDPG) has biased composition (gly residues). The residue at position 129 (Ser129) is a Phosphoserine.

The protein belongs to the aspartyl/asparaginyl beta-hydroxylase family.

The protein resides in the membrane. The chain is Aspartate beta-hydroxylase domain-containing protein 1 (ASPHD1) from Homo sapiens (Human).